The following is a 335-amino-acid chain: MAHVAEWKKEEVNELKSLIDKYDVIGIVDLLNIPAKQLQEMRKSLHNKAVIRMSKKNLIDLALEDCNASKNNIVDLSEHMEGQVAVIATEMNPFKLYKILEDSKTSAPAKPGAIATDDIVIPEGDTGFEPGPFLGELQQVGIPAKIDKGKIVVSKETVLVEAGEEVSAAVASTLSRMDINPMEVGIDLRAVYEEEAIYTSEVLAIDEEQTLADVQNAFRNAFNLSVNAAIPTEETISTIITLAYTRAINVGVDAAIMTSETSEPIIGLAQAKMLALASEVSGTEGALDDELAEKLSNVAVAAAPVVEETVEEEEEEEEEEDAEEEAAAGLGALFG.

A disordered region spans residues 306–335 (VEETVEEEEEEEEEEDAEEEAAAGLGALFG). Acidic residues predominate over residues 308 to 326 (ETVEEEEEEEEEEDAEEEA).

This sequence belongs to the universal ribosomal protein uL10 family. Part of the 50S ribosomal subunit. Forms part of the ribosomal stalk which helps the ribosome interact with GTP-bound translation factors. Forms a heptameric L10(L12)2(L12)2(L12)2 complex, where L10 forms an elongated spine to which the L12 dimers bind in a sequential fashion.

Its function is as follows. Forms part of the ribosomal stalk, playing a central role in the interaction of the ribosome with GTP-bound translation factors. The polypeptide is Large ribosomal subunit protein uL10 (Methanobrevibacter smithii (strain ATCC 35061 / DSM 861 / OCM 144 / PS)).